The following is a 262-amino-acid chain: Global transcriptional regulator CodY (262 aa).

A GAF domain region spans residues 1 to 159 (MAHLLEKTRK…ASTVVGIQLL (159 aa)). The H-T-H motif DNA-binding region spans 207 to 226 (ASVIADRIGITRSVIVNALR).

This sequence belongs to the CodY family.

The protein resides in the cytoplasm. Functionally, DNA-binding global transcriptional regulator which is involved in the adaptive response to starvation and acts by directly or indirectly controlling the expression of numerous genes in response to nutrient availability. During rapid exponential growth, CodY is highly active and represses genes whose products allow adaptation to nutrient depletion. The chain is Global transcriptional regulator CodY from Streptococcus pneumoniae serotype 4 (strain ATCC BAA-334 / TIGR4).